The sequence spans 165 residues: Large ribosomal subunit protein uL10 (165 aa).

The protein belongs to the universal ribosomal protein uL10 family. In terms of assembly, part of the ribosomal stalk of the 50S ribosomal subunit. The N-terminus interacts with L11 and the large rRNA to form the base of the stalk. The C-terminus forms an elongated spine to which L12 dimers bind in a sequential fashion forming a multimeric L10(L12)X complex.

Forms part of the ribosomal stalk, playing a central role in the interaction of the ribosome with GTP-bound translation factors. The polypeptide is Large ribosomal subunit protein uL10 (Pectobacterium atrosepticum (strain SCRI 1043 / ATCC BAA-672) (Erwinia carotovora subsp. atroseptica)).